Consider the following 616-residue polypeptide: Telomeric repeat-binding factor 2-interacting protein 1 (616 aa).

Positions 15–98 (FLDPGGQSMR…QQLDPNDYAI (84 aa)) constitute a BRCT domain. In terms of domain architecture, Myb-like spans 112–169 (NQGSGRLGYSSEEDAAILKFIEKRQQDAKGNLVWKEMEKRHVTEHSWQSMKDRFLKHL). The interval 174–518 (ADKPTKKSPI…CSHIRETPEE (345 aa)) is disordered. Low complexity predominate over residues 232–245 (PERASSPPEEPQAA). The span at 246 to 255 (GQPSQASSND) shows a compositional bias: polar residues. 2 stretches are compositionally biased toward basic and acidic residues: residues 271–288 (ENPR…EHSS) and 344–358 (RSSR…RDIP). 2 stretches are compositionally biased toward polar residues: residues 363-382 (EQSS…SDSG) and 397-415 (NANS…ASTP). The span at 431–444 (EDSDVMDDSEECEN) shows a compositional bias: acidic residues. Positions 468–480 (REPESQAEHHEET) are enriched in basic and acidic residues. Positions 597-613 (SKFGEEEVTRRKSFLAT) match the Nuclear localization signal motif.

This sequence belongs to the RAP1 family. As to quaternary structure, homodimer. Component of the shelterin complex (telosome). Interacts with terf2; the interaction is direct.

The protein resides in the nucleus. Its subcellular location is the chromosome. The protein localises to the telomere. Functionally, acts both as a regulator of telomere function and as a transcription regulator. Involved in the regulation of telomere length and protection as a component of the shelterin complex (telosome). Does not bind DNA directly: recruited to telomeric double-stranded 5'-TTAGGG-3' repeats via its interaction with terf2. Independently of its function in telomeres, also acts as a transcription regulator: recruited to extratelomeric 5'-TTAGGG-3' sites via its association with terf2 or other factors, and regulates gene expression. This is Telomeric repeat-binding factor 2-interacting protein 1 (terf2ip) from Danio rerio (Zebrafish).